Consider the following 293-residue polypeptide: Mediator of RNA polymerase II transcription subunit 27 (293 aa).

It belongs to the Mediator complex subunit 27 family. As to quaternary structure, component of the Mediator complex, which includes at least CDK8, MED4, MED6, MED11, MED14, MED17, MED18, MED20, MED21, MED22, MED27, MED28, MED30 and MED31.

It is found in the nucleus. Functionally, component of the Mediator complex, a coactivator involved in the regulated transcription of nearly all RNA polymerase II-dependent genes. Mediator functions as a bridge to convey information from gene-specific regulatory proteins to the basal RNA polymerase II transcription machinery. Mediator is recruited to promoters by direct interactions with regulatory proteins and serves as a scaffold for the assembly of a functional preinitiation complex with RNA polymerase II and the general transcription factors. Required for activated transcription of the MtnA gene. This is Mediator of RNA polymerase II transcription subunit 27 (MED27) from Drosophila melanogaster (Fruit fly).